Reading from the N-terminus, the 392-residue chain is DNA replication and repair protein RecF (392 aa).

Position 30–37 (30–37 (GRNGFGKT)) interacts with ATP.

It belongs to the RecF family.

It is found in the cytoplasm. Functionally, the RecF protein is involved in DNA metabolism; it is required for DNA replication and normal SOS inducibility. RecF binds preferentially to single-stranded, linear DNA. It also seems to bind ATP. The polypeptide is DNA replication and repair protein RecF (Corynebacterium aurimucosum (strain ATCC 700975 / DSM 44827 / CIP 107346 / CN-1) (Corynebacterium nigricans)).